The following is a 259-amino-acid chain: Pimeloyl-[acyl-carrier protein] methyl ester esterase (259 aa).

Residues 15-242 enclose the AB hydrolase-1 domain; sequence HLVLLHGWGL…AAHAPFISHP (228 aa). Residues W22, 82-83, and 143-147 each bind substrate; these read SL and FLALQ. The active-site Nucleophile is the S82. Active-site residues include D207 and H235. Residue H235 participates in substrate binding.

It belongs to the AB hydrolase superfamily. Carboxylesterase BioH family. As to quaternary structure, monomer.

It is found in the cytoplasm. It catalyses the reaction 6-carboxyhexanoyl-[ACP] methyl ester + H2O = 6-carboxyhexanoyl-[ACP] + methanol + H(+). Its pathway is cofactor biosynthesis; biotin biosynthesis. Functionally, the physiological role of BioH is to remove the methyl group introduced by BioC when the pimeloyl moiety is complete. It allows to synthesize pimeloyl-ACP via the fatty acid synthetic pathway through the hydrolysis of the ester bonds of pimeloyl-ACP esters. The protein is Pimeloyl-[acyl-carrier protein] methyl ester esterase of Cronobacter sakazakii (strain ATCC BAA-894) (Enterobacter sakazakii).